The primary structure comprises 137 residues: Endoribonuclease YbeY (137 aa).

Residues H105, H109, and D115 each contribute to the Zn(2+) site.

This sequence belongs to the endoribonuclease YbeY family. Zn(2+) serves as cofactor.

It localises to the cytoplasm. In terms of biological role, single strand-specific metallo-endoribonuclease involved in late-stage 70S ribosome quality control and in maturation of the 3' terminus of the 16S rRNA. The chain is Endoribonuclease YbeY from Chlorobaculum tepidum (strain ATCC 49652 / DSM 12025 / NBRC 103806 / TLS) (Chlorobium tepidum).